Here is a 568-residue protein sequence, read N- to C-terminus: MSSSSIEDIKGKSHRLRGSLLESLANPTTGALHESDQTLIKYHGSYQQDDRDLREERRRQKLEPAYQFMIRTRTPGGVITPQQWLQLDAIATRYANHSLRVTTRQAFQFHGVIKRELKATMQAINAALIDTLAACGDVNRNVQVAANPLLSRAHADLYTDAAHLSEHLLPNTRAYYEIWLDEKKVAGAGEEEEPIYGPHYLPRKFKIGFAAPPINDVDVFANDLGFIAVIVDNTLLGYNVAIGGGMGTTHGDPDTWPRVGNIIGFITRADLIAISTAIVTTQRDFGNRTLRKRARFKYTIDDRGLDCIVGEIQQRAGITLQPARPFVFEHNGDRYGWIEGEDRHWHLTLSLPAGRIADTESSPLLSGFRAIAQLGIGQFRMTPNQNVVIAGISPGQRATIDALVTQYGLDTGNRAPTALARHAMACVALPTCGLAMAEAERYLPDFNVKLQPILEKYGLAEKPILLRISGCPNGCSRPYLAEIALVGKAPGRYNLMLGGDQRGQRLNTLYRENITETEILAALEPLLGRYQQKRLPGEGFGDFLHRTGIIALPPYPTHRHVISSTLQA.

[4Fe-4S] cluster-binding residues include Cys426, Cys432, Cys471, and Cys475. Residue Cys475 coordinates siroheme.

It belongs to the nitrite and sulfite reductase 4Fe-4S domain family. In terms of assembly, alpha(8)-beta(8). The alpha component is a flavoprotein, the beta component is a hemoprotein. Siroheme is required as a cofactor. [4Fe-4S] cluster serves as cofactor.

The enzyme catalyses hydrogen sulfide + 3 NADP(+) + 3 H2O = sulfite + 3 NADPH + 4 H(+). It functions in the pathway sulfur metabolism; hydrogen sulfide biosynthesis; hydrogen sulfide from sulfite (NADPH route): step 1/1. In terms of biological role, component of the sulfite reductase complex that catalyzes the 6-electron reduction of sulfite to sulfide. This is one of several activities required for the biosynthesis of L-cysteine from sulfate. The polypeptide is Sulfite reductase [NADPH] hemoprotein beta-component (Xylella fastidiosa (strain 9a5c)).